The sequence spans 453 residues: MSPQTETKAGVGFKAGVKEYKLTYYTPEYETKDTDILAAFRVTPQPGVPPEERGAAVAAESSTGTWTTVWTDGLTSLDRYKGRCYHIEPVPGEEEQFIAYVAYPLDLFEEGSVTNMFTSIVGNVFGFKALRALRLEDLRIPVAYVKTFQGPPHGIQVERDKLNKYGRPLLGCTIKPKLGLSAKNYGRAVYECLRGGLDFTKDDENVNSQPFMRWRDRFLFCAEAIYKSQAETGEIKGHYLNATAGTCEEMIKRAVFARELGVPIVMHDYLTGGFTANTTLSHYCRDNGLLLHIHRAMHAVIDRQKNHGMHFRVLAKALRMSGGDHIHSGTVVGKLEGERDITLGFVDLLRDDYIEKDRSRGIYFTQDWVSLPGVLPVASRGIHVWHMPALTEIFGDDSVLQFGGGTLGHPWGNAPGAVANRVALEACVKARNEGRDLASEGGEIIREACKWSP.

Residues 1–2 constitute a propeptide that is removed on maturation; sequence MS. An N-acetylproline modification is found at Pro3. An N6,N6,N6-trimethyllysine modification is found at Lys14. Residues Asn123 and Thr173 each contribute to the substrate site. The active-site Proton acceptor is Lys175. Lys177 lines the substrate pocket. 3 residues coordinate Mg(2+): Lys201, Asp203, and Glu204. Lys201 carries the N6-carboxylysine modification. Residue His294 is the Proton acceptor of the active site. Substrate-binding residues include Arg295, His327, and Ser379.

It belongs to the RuBisCO large chain family. Type I subfamily. As to quaternary structure, heterohexadecamer of 8 large chains and 8 small chains; disulfide-linked. The disulfide link is formed within the large subunit homodimers. Mg(2+) serves as cofactor. In terms of processing, the disulfide bond which can form in the large chain dimeric partners within the hexadecamer appears to be associated with oxidative stress and protein turnover.

It localises to the plastid. The protein resides in the chloroplast. It carries out the reaction 2 (2R)-3-phosphoglycerate + 2 H(+) = D-ribulose 1,5-bisphosphate + CO2 + H2O. The catalysed reaction is D-ribulose 1,5-bisphosphate + O2 = 2-phosphoglycolate + (2R)-3-phosphoglycerate + 2 H(+). Its function is as follows. RuBisCO catalyzes two reactions: the carboxylation of D-ribulose 1,5-bisphosphate, the primary event in carbon dioxide fixation, as well as the oxidative fragmentation of the pentose substrate in the photorespiration process. Both reactions occur simultaneously and in competition at the same active site. The chain is Ribulose bisphosphate carboxylase large chain from Galium parisiense (Wall bedstraw).